Here is a 480-residue protein sequence, read N- to C-terminus: MNYFPIFANLAGRPVLVVGGGSVAARKISLLLDAGAQVRVVANQLNAELSALAAENKILWLAEEFRAEHIRTVFLIIAASSDQALNRRVFQLAESCQKPVNVVDDRDYCSFIFPSIINRNPIQIAVSSSGSAPVLARLLREKLEALLPHSLGDMAEISGRWRDAVKAKLKSVTERRRFWEKQFNGRFAALVKNQQTAQAEQELAKQLEQNYQGGFVSLVGAGPGDAGLLTLKGLQEIQQADVVLYDALVSDGILSLVRRDAERIFVGKRARGDRTPQEDTNALMVRLAREGRRVVRLKGGDPFVFGRGGEELETLARHQIPFSVVPGITAAVGATAYAGIPLTHRDYAQSAVFVTGHRKADAPDIEWQTLARSRQTLVIYMGALKAALIAERLQQHGRSPDTPAAVISQGTLPAQKTATGTLANLAELAETAPNPALIVIGEVVGLHEKLAWFGENGEGENRVGQAYPALGGLNAGQRAA.

Residues 1–203 (MNYFPIFANL…QQTAQAEQEL (203 aa)) form a precorrin-2 dehydrogenase /sirohydrochlorin ferrochelatase region. Residues 22–23 (SV) and 43–44 (NQ) each bind NAD(+). Ser128 carries the phosphoserine modification. The tract at residues 214 to 480 (GFVSLVGAGP…GGLNAGQRAA (267 aa)) is uroporphyrinogen-III C-methyltransferase. S-adenosyl-L-methionine is bound at residue Pro223. The active-site Proton acceptor is the Asp246. The active-site Proton donor is Lys268. S-adenosyl-L-methionine-binding positions include 299–301 (GGD), Val304, 329–330 (TA), Met381, and Gly410.

The protein in the N-terminal section; belongs to the precorrin-2 dehydrogenase / sirohydrochlorin ferrochelatase family. This sequence in the C-terminal section; belongs to the precorrin methyltransferase family.

The catalysed reaction is uroporphyrinogen III + 2 S-adenosyl-L-methionine = precorrin-2 + 2 S-adenosyl-L-homocysteine + H(+). The enzyme catalyses precorrin-2 + NAD(+) = sirohydrochlorin + NADH + 2 H(+). It carries out the reaction siroheme + 2 H(+) = sirohydrochlorin + Fe(2+). Its pathway is cofactor biosynthesis; adenosylcobalamin biosynthesis; precorrin-2 from uroporphyrinogen III: step 1/1. It functions in the pathway cofactor biosynthesis; adenosylcobalamin biosynthesis; sirohydrochlorin from precorrin-2: step 1/1. It participates in porphyrin-containing compound metabolism; siroheme biosynthesis; precorrin-2 from uroporphyrinogen III: step 1/1. The protein operates within porphyrin-containing compound metabolism; siroheme biosynthesis; siroheme from sirohydrochlorin: step 1/1. Its pathway is porphyrin-containing compound metabolism; siroheme biosynthesis; sirohydrochlorin from precorrin-2: step 1/1. Multifunctional enzyme that catalyzes the SAM-dependent methylations of uroporphyrinogen III at position C-2 and C-7 to form precorrin-2 via precorrin-1. Then it catalyzes the NAD-dependent ring dehydrogenation of precorrin-2 to yield sirohydrochlorin. Finally, it catalyzes the ferrochelation of sirohydrochlorin to yield siroheme. The protein is Siroheme synthase of Neisseria meningitidis serogroup C (strain 053442).